A 197-amino-acid polypeptide reads, in one-letter code: Putative NADH dehydrogenase/NAD(P)H nitroreductase Plav_3612 (197 aa).

It belongs to the nitroreductase family. HadB/RutE subfamily. FMN is required as a cofactor.

The sequence is that of Putative NADH dehydrogenase/NAD(P)H nitroreductase Plav_3612 from Parvibaculum lavamentivorans (strain DS-1 / DSM 13023 / NCIMB 13966).